The chain runs to 517 residues: zeta-carotene-forming phytoene desaturase (517 aa).

Residue 11–44 (VVVGAGVGGLAAAARLAHQGFDVQVFEKTQGPGG) participates in FAD binding.

The protein belongs to the carotenoid/retinoid oxidoreductase family. It depends on FAD as a cofactor.

The enzyme catalyses 15-cis-phytoene + 2 A = all-trans-zeta-carotene + 2 AH2. Its pathway is carotenoid biosynthesis; lycopene biosynthesis. Its function is as follows. Dehydrogenates carotenes in the cis conformation: has cis-to-trans isomerase activity and mediates dehydrogenation of cis-phytoene, producing zeta-carotene via the intermediary of phytofluene by the symmetrical introduction of 2 double bonds at the C-11 and C-11' positions of phytoene. This chain is zeta-carotene-forming phytoene desaturase (carA2), found in Myxococcus xanthus.